Reading from the N-terminus, the 364-residue chain is UDP-N-acetylglucosamine--N-acetylmuramyl-(pentapeptide) pyrophosphoryl-undecaprenol N-acetylglucosamine transferase (364 aa).

UDP-N-acetyl-alpha-D-glucosamine is bound by residues 15-17, Asn-123, Arg-164, Ser-191, and Gln-286; that span reads TGG.

Belongs to the glycosyltransferase 28 family. MurG subfamily.

It localises to the cell inner membrane. It carries out the reaction di-trans,octa-cis-undecaprenyl diphospho-N-acetyl-alpha-D-muramoyl-L-alanyl-D-glutamyl-meso-2,6-diaminopimeloyl-D-alanyl-D-alanine + UDP-N-acetyl-alpha-D-glucosamine = di-trans,octa-cis-undecaprenyl diphospho-[N-acetyl-alpha-D-glucosaminyl-(1-&gt;4)]-N-acetyl-alpha-D-muramoyl-L-alanyl-D-glutamyl-meso-2,6-diaminopimeloyl-D-alanyl-D-alanine + UDP + H(+). It participates in cell wall biogenesis; peptidoglycan biosynthesis. Cell wall formation. Catalyzes the transfer of a GlcNAc subunit on undecaprenyl-pyrophosphoryl-MurNAc-pentapeptide (lipid intermediate I) to form undecaprenyl-pyrophosphoryl-MurNAc-(pentapeptide)GlcNAc (lipid intermediate II). This Prochlorococcus marinus subsp. pastoris (strain CCMP1986 / NIES-2087 / MED4) protein is UDP-N-acetylglucosamine--N-acetylmuramyl-(pentapeptide) pyrophosphoryl-undecaprenol N-acetylglucosamine transferase.